Here is a 123-residue protein sequence, read N- to C-terminus: ATP synthase epsilon chain (123 aa).

The disordered stretch occupies residues 96 to 123 (ESRKQSAETEHDKAVAESELRAVKRMEA).

Belongs to the ATPase epsilon chain family. As to quaternary structure, F-type ATPases have 2 components, CF(1) - the catalytic core - and CF(0) - the membrane proton channel. CF(1) has five subunits: alpha(3), beta(3), gamma(1), delta(1), epsilon(1). CF(0) has three main subunits: a, b and c.

It localises to the cell membrane. Functionally, produces ATP from ADP in the presence of a proton gradient across the membrane. The chain is ATP synthase epsilon chain from Corynebacterium jeikeium (strain K411).